Consider the following 399-residue polypeptide: Zinc metalloproteinase nas-25 (399 aa).

Residues 1 to 20 (MQIYLGITICLVAFLTVIDC) form the signal peptide. The region spanning 41–237 (QVQRDLTYRW…DQINQYYQCY (197 aa)) is the Peptidase M12A domain. Asn52 and Asn61 each carry an N-linked (GlcNAc...) asparagine glycan. Disulfide bonds link Cys82–Cys236, Cys106–Cys126, Cys240–Cys260, and Cys265–Cys274. His134 contacts Zn(2+). The active site involves Glu135. 2 residues coordinate Zn(2+): His138 and His144. The region spanning 232–275 (QYYQCYDSCRNAGQLANCANGGIPNPNNCQVCNCPMGYGGDLCD) is the EGF-like domain. The N-linked (GlcNAc...) asparagine glycan is linked to Asn371.

Requires Zn(2+) as cofactor. In terms of tissue distribution, expressed in pharyngeal muscles, pharyngeal-intestinal valve, rectal gland cells and arcade cells.

It is found in the secreted. Metalloprotease. This is Zinc metalloproteinase nas-25 (nas-25) from Caenorhabditis elegans.